Here is a 177-residue protein sequence, read N- to C-terminus: Inner membrane-spanning protein YciB (177 aa).

The next 5 helical transmembrane spans lie at 22-42, 50-70, 76-96, 121-141, and 149-169; these read IFIASGSLIVISGLICIIHWI, ISLFSFLSVFFFGSLTIFFHN, WKITIIYIIFSLVLLISQFFT, FIWSLFFLFCAILNIYIAYYF, and FKVFGFTSLTFFLILITSIYI.

The protein belongs to the YciB family.

The protein resides in the cell inner membrane. Plays a role in cell envelope biogenesis, maintenance of cell envelope integrity and membrane homeostasis. The chain is Inner membrane-spanning protein YciB from Buchnera aphidicola subsp. Acyrthosiphon pisum (strain 5A).